The following is a 409-amino-acid chain: Elongation factor Tu (409 aa).

Positions 10–214 (KPHVNIGTIG…EVDAYIPEPE (205 aa)) constitute a tr-type G domain. Residues 19 to 26 (GHVDHGKT) are G1. 19–26 (GHVDHGKT) contributes to the GTP binding site. Residue Thr-26 participates in Mg(2+) binding. Positions 60–64 (GITIN) are G2. Residues 81 to 84 (DCPG) form a G3 region. Residues 81–85 (DCPGH) and 136–139 (NKQD) contribute to the GTP site. Residues 136–139 (NKQD) are G4. Positions 174-176 (SAL) are G5.

Belongs to the TRAFAC class translation factor GTPase superfamily. Classic translation factor GTPase family. EF-Tu/EF-1A subfamily. Monomer.

The protein localises to the cytoplasm. It catalyses the reaction GTP + H2O = GDP + phosphate + H(+). GTP hydrolase that promotes the GTP-dependent binding of aminoacyl-tRNA to the A-site of ribosomes during protein biosynthesis. This chain is Elongation factor Tu, found in Rippkaea orientalis (strain PCC 8801 / RF-1) (Cyanothece sp. (strain PCC 8801)).